Consider the following 139-residue polypeptide: uncharacterized protein (139 aa).

A run of 3 helical transmembrane segments spans residues 38-60 (YFLH…LYVF), 72-94 (FIIL…CAGS), and 114-136 (ITVV…LIVA).

The protein resides in the cell membrane. This is an uncharacterized protein from Treponema pallidum (strain Nichols).